The primary structure comprises 59 residues: Protein QUA-QUINE STARCH (59 aa).

As to expression, expressed in hypocotyls, leaves, vasculature, hydathodes, trichomes, pedicels, sepals, filaments, mature pollen, stigma papillae, styles, siliques, root and shoot tips, but not in shoot meristem, petals or root epidermis.

The protein localises to the cytoplasm. Involved in regulating carbon and nitrogen allocation to starch and protein. This is Protein QUA-QUINE STARCH from Arabidopsis thaliana (Mouse-ear cress).